A 216-amino-acid chain; its full sequence is DNA gyrase subunit B (216 aa).

Positions S140–I216 constitute a Toprim domain.

This sequence belongs to the type II topoisomerase GyrB family. In terms of assembly, heterotetramer, composed of two GyrA and two GyrB chains. In the heterotetramer, GyrA contains the active site tyrosine that forms a transient covalent intermediate with DNA, while GyrB binds cofactors and catalyzes ATP hydrolysis.

It is found in the cytoplasm. It catalyses the reaction ATP-dependent breakage, passage and rejoining of double-stranded DNA.. Its function is as follows. A type II topoisomerase that negatively supercoils closed circular double-stranded (ds) DNA in an ATP-dependent manner to modulate DNA topology and maintain chromosomes in an underwound state. Negative supercoiling favors strand separation, and DNA replication, transcription, recombination and repair, all of which involve strand separation. Also able to catalyze the interconversion of other topological isomers of dsDNA rings, including catenanes and knotted rings. Type II topoisomerases break and join 2 DNA strands simultaneously in an ATP-dependent manner. The protein is DNA gyrase subunit B (gyrB) of Acinetobacter bereziniae (Acinetobacter genomosp. 10).